The sequence spans 300 residues: F-box/LRR-repeat protein 15 (300 aa).

M1 carries the post-translational modification N-acetylmethionine. Residues 19 to 66 (LLDLPWEDVLLPHILSRVPLRQLLRLQRVSRAFRALVQLHLAGLRRFD) enclose the F-box domain. Residues 113-269 (NPQLRSVALA…EPSLSRLRKR (157 aa)) are interaction with SMURF1. 5 LRR repeats span residues 141-162 (RLQRLSLAHCDWVDGLALRGLA), 167-188 (ALEELDLTACRQLKDEAIVYLA), 194-215 (GLRSLSLAVNANVGDAAVQELA), 220-241 (ELEHLDLTGCLRVGSDGVRTLA), and 246-267 (ALRSLRVRHCHHVAEPSLSRLR).

This sequence belongs to the FBXL15 family. Part of the SCF (SKP1-CUL1-F-box) E3 ubiquitin-protein ligase complex SCF(FBXL15) composed of CUL1, SKP1, RBX1 and FBXL15.

Its subcellular location is the cytoplasm. It functions in the pathway protein modification; protein ubiquitination. Its function is as follows. Substrate recognition component of a SCF (SKP1-CUL1-F-box protein) E3 ubiquitin-protein ligase complex which mediates the ubiquitination and subsequent proteasomal degradation of SMURF1, thereby acting as a positive regulator of the BMP signaling pathway. Required for dorsal/ventral pattern formation and bone mass maintenance. Also mediates ubiquitination of SMURF2 and WWP2. The chain is F-box/LRR-repeat protein 15 (FBXL15) from Canis lupus familiaris (Dog).